Consider the following 257-residue polypeptide: Folate receptor alpha (257 aa).

The signal sequence occupies residues M1 to T24. 8 disulfides stabilise this stretch: C37/C65, C57/C105, C66/C109, C89/C175, C96/C146, C135/C209, C139/C189, and C152/C169. Residue N69 is glycosylated (N-linked (GlcNAc...) asparagine). Residues D103, Y107, W124–R128, H157–W162, and S196 contribute to the folate site. A glycan (N-linked (GlcNAc...) asparagine) is linked at N161. N201 carries an N-linked (GlcNAc...) asparagine glycan. S234 carries GPI-anchor amidated serine lipidation. Residues G235–S257 constitute a propeptide, removed in mature form.

Belongs to the folate receptor family. The secreted form is derived from the membrane-bound form either by cleavage of the GPI anchor, or/and by proteolysis catalyzed by a metalloprotease. In terms of tissue distribution, primarily expressed in tissues of epithelial origin. Expression is increased in malignant tissues. Expressed in kidney, lung and cerebellum. Detected in placenta and thymus epithelium.

Its subcellular location is the cell membrane. It is found in the apical cell membrane. It localises to the basolateral cell membrane. The protein localises to the secreted. The protein resides in the cytoplasmic vesicle. Its subcellular location is the clathrin-coated vesicle. It is found in the endosome. Functionally, binds to folate and reduced folic acid derivatives and mediates delivery of 5-methyltetrahydrofolate and folate analogs into the interior of cells. Has high affinity for folate and folic acid analogs at neutral pH. Exposure to slightly acidic pH after receptor endocytosis triggers a conformation change that strongly reduces its affinity for folates and mediates their release. Required for normal embryonic development and normal cell proliferation. The chain is Folate receptor alpha (FOLR1) from Homo sapiens (Human).